We begin with the raw amino-acid sequence, 249 residues long: Type III pantothenate kinase (249 aa).

Residue 6–13 participates in ATP binding; it reads DCGNSFIK. Residues tyrosine 93 and 100 to 103 each bind substrate; that span reads GLDR. Residue aspartate 102 is the Proton acceptor of the active site. Aspartate 122 contacts K(+). Threonine 125 contacts ATP. Substrate is bound at residue threonine 181.

This sequence belongs to the type III pantothenate kinase family. As to quaternary structure, homodimer. NH4(+) is required as a cofactor. It depends on K(+) as a cofactor.

The protein resides in the cytoplasm. The catalysed reaction is (R)-pantothenate + ATP = (R)-4'-phosphopantothenate + ADP + H(+). It participates in cofactor biosynthesis; coenzyme A biosynthesis; CoA from (R)-pantothenate: step 1/5. In terms of biological role, catalyzes the phosphorylation of pantothenate (Pan), the first step in CoA biosynthesis. This Pseudomonas syringae pv. syringae (strain B728a) protein is Type III pantothenate kinase.